A 288-amino-acid polypeptide reads, in one-letter code: Polyamine aminopropyltransferase (288 aa).

The region spanning Glu-9–Asp-238 is the PABS domain. Gln-33 contacts S-methyl-5'-thioadenosine. His-64 and Asp-88 together coordinate spermidine. S-methyl-5'-thioadenosine contacts are provided by residues Glu-108 and Asp-140–Gly-141. The active-site Proton acceptor is Asp-158. Asp-158–Asp-161 lines the spermidine pocket. Pro-165 contacts S-methyl-5'-thioadenosine.

This sequence belongs to the spermidine/spermine synthase family. As to quaternary structure, homodimer or homotetramer.

The protein resides in the cytoplasm. The enzyme catalyses S-adenosyl 3-(methylsulfanyl)propylamine + putrescine = S-methyl-5'-thioadenosine + spermidine + H(+). It functions in the pathway amine and polyamine biosynthesis; spermidine biosynthesis; spermidine from putrescine: step 1/1. Catalyzes the irreversible transfer of a propylamine group from the amino donor S-adenosylmethioninamine (decarboxy-AdoMet) to putrescine (1,4-diaminobutane) to yield spermidine. The sequence is that of Polyamine aminopropyltransferase from Shigella dysenteriae serotype 1 (strain Sd197).